We begin with the raw amino-acid sequence, 440 residues long: Indoleamine 2,3-dioxygenase qulI (440 aa).

His347 is a binding site for heme.

Belongs to the indoleamine 2,3-dioxygenase family. In terms of assembly, monomer. The cofactor is heme.

The catalysed reaction is D-tryptophan + O2 = N-formyl-D-kynurenine. It carries out the reaction L-tryptophan + O2 = N-formyl-L-kynurenine. It functions in the pathway secondary metabolite biosynthesis. Functionally, indoleamine 2,3-dioxygenase; part of the gene cluster that mediates the biosynthesis of quinolactacin A2 (QUL A2), a fungal alkaloid that features a quinolone-gamma-lactam hybrid, which is a potential pharmacophore for the treatment of cancer and Alzheimer's disease. The quinolone-gamma-lactam hybrid scaffold is synthesized from the combination of L-isoleucine (L-Ile) and the nonproteinogenic amino acid L-kynurenine, followed by quinolone cyclization, oxidative decarboxylation, and lactam formation. Additionally, the N-methyl group is derived from methionine, which might be catalyzed by an S-adenosylmethionine (SAM)-dependent methyltransferase. Bioconversion of L-tryptophan to L-kynurenine could be catalyzed by the indoleamine-2,3-dioxygenase (IDO) qulI to produce an unstable product, N-formyl-L-kynurenine, followed by kynurenine formamidase catalyzed hydrolysis. QulM then acts as a methyltransferase that methylates L-kynurenine at the N-4 position. The FMN-dependent alpha-hydroxy acid dehydrogenase qulF than functions as an oxidative decarboxylase which converts N-methylkynurenine into 2-aminobenzoylacetamide via 2 tandem reactions, including dehydrogenation and decarboxylation. An amidase located outside of the qul gene cluster further produces the unstable beta-keto acid precursor N-methyl-2-aminobenzoylacetate, which could be spontaneously dehydrated to form N-methyl-4-hydroxy-2-quinolone. The NRPS qulB is able to incorporate N-methyl-2-aminobenzoylacetate and efficiently compete with the spontaneous reaction. By further extending the beta-keto acid with L-Ile, qulA performs a Dieckmann condensation to form the gamma-lactam ring and release a 4-ketopyrrolidinone intermediate from the assembly line. This intermediate could plausibly further undergo a spontaneous cyclization to yield the final quinolone-gamma-lactam hybrid structure. The chain is Indoleamine 2,3-dioxygenase qulI from Penicillium citrinum.